A 363-amino-acid chain; its full sequence is G-protein coupled receptor 6 (363 aa).

The Extracellular segment spans residues 1–75; sequence MNASAAALNE…SGLLLSAVNP (75 aa). N2 and N9 each carry an N-linked (GlcNAc...) asparagine glycan. Residues 28–51 are disordered; that stretch reads AGTPDTSEWGPPAASAALGGGGGP. N-linked (GlcNAc...) asparagine glycosylation is present at N52. The helical transmembrane segment at 76–95 threads the bilayer; that stretch reads WDVLLCVSGTVIAGENALVV. At 96-107 the chain is on the cytoplasmic side; that stretch reads ALIASTPALRTP. Residues 108–131 form a helical membrane-spanning segment; it reads MFVLVGSLATADLLAGCGLILHFV. The Extracellular portion of the chain corresponds to 132-143; the sequence is FQYVVPSETVSL. A helical membrane pass occupies residues 144–165; it reads LMVGFLVASFAASVSSLLAITV. Residues 166-186 lie on the Cytoplasmic side of the membrane; it reads DRYLSLYNALTYYSRRTLLGV. The helical transmembrane segment at 187–206 threads the bilayer; it reads HLLLAATWTVSLGLGLLPVL. The Extracellular segment spans residues 207 to 231; that stretch reads GWNCLADRASCSVVRPLTRSHVALL. Residues 232-250 traverse the membrane as a helical segment; that stretch reads STSFFVVFGIMLHLYVRIC. The Cytoplasmic portion of the chain corresponds to 251-278; it reads QVVWRHAHQIALQQHCLAPPHLAATRKG. Residues 279–305 traverse the membrane as a helical segment; sequence VGTLAVVLGTFGASWLPFAIYCVVGSQ. Residues 306-310 lie on the Extracellular side of the membrane; that stretch reads EDPAI. Residues 311–332 traverse the membrane as a helical segment; sequence YTYATLLPATYNSMINPIIYAF. The Cytoplasmic segment spans residues 333 to 363; it reads RNQEIQRALWLLFCGCFQSKVPFRSRSPSEV. The S-palmitoyl cysteine moiety is linked to residue C346. 3 positions are modified to phosphoserine: S357, S359, and S361.

The protein belongs to the G-protein coupled receptor 1 family. In terms of tissue distribution, expressed in the brain, with a prominent distribution in striatum.

The protein localises to the cell membrane. Functionally, orphan receptor with constitutive G(s) signaling activity that activate cyclic AMP. Promotes neurite outgrowth and blocks myelin inhibition in neurons. This is G-protein coupled receptor 6 (Gpr6) from Rattus norvegicus (Rat).